Here is a 612-residue protein sequence, read N- to C-terminus: Cytoplasmic dynein 1 intermediate chain 2 (612 aa).

2 stretches are compositionally biased toward basic and acidic residues: residues 1–13 (MSDK…ELER) and 20–43 (QIRE…KKEA). 2 disordered regions span residues 1 to 117 (MSDK…MAKI) and 129 to 188 (TYTK…EEKQ). The residue at position 2 (Ser2) is an N-acetylserine. Ser51 is modified (diphosphoserine). Residues Ser51 and Ser84 each carry the phosphoserine modification. The span at 82–91 (PSSKSVSTPS) shows a compositional bias: low complexity. At Thr89 the chain carries Phosphothreonine. 3 positions are modified to phosphoserine: Ser91, Ser95, and Ser98. Over residues 164–188 (EKTLKKDEESDSKAPPHELTEEEKQ) the composition is skewed to basic and acidic residues. WD repeat units lie at residues 251–300 (SKHR…TTPE), 304–344 (HCQS…RTPV), 353–394 (AHTH…HPQD), 403–443 (SKAV…AGIS), 448–493 (GHQG…PLYS), 496–536 (DNSD…EVPT), and 542–581 (EGNP…AVPR).

Belongs to the dynein intermediate chain family. Homodimer. The cytoplasmic dynein 1 complex consists of two catalytic heavy chains (HCs) and a number of non-catalytic subunits presented by intermediate chains (ICs), light intermediate chains (LICs) and light chains (LCs); the composition seems to vary in respect to the IC, LIC and LC composition. The heavy chain homodimer serves as a scaffold for the probable homodimeric assembly of the respective non-catalytic subunits. The ICs and LICs bind directly to the HC dimer and the LCs assemble on the IC dimer. Interacts with DYNLT3. Interacts with DYNLT1. Interacts (dephosphorylated at Ser-84) with DCTN1. Interacts with BICD2. Interacts with SPEF2. Interacts with CFAP61. The phosphorylation status of Ser-84 appears to be involved in dynactin-dependent target binding. In terms of processing, pyrophosphorylation by 5-diphosphoinositol pentakisphosphate (5-IP7) promotes interaction with DCTN1. Serine pyrophosphorylation is achieved by Mg(2+)-dependent, but enzyme independent transfer of a beta-phosphate from a inositol pyrophosphate to a pre-phosphorylated serine residue.

Its subcellular location is the cytoplasm. The protein resides in the cytoskeleton. Functionally, acts as one of several non-catalytic accessory components of the cytoplasmic dynein 1 complex that are thought to be involved in linking dynein to cargos and to adapter proteins that regulate dynein function. Cytoplasmic dynein 1 acts as a motor for the intracellular retrograde motility of vesicles and organelles along microtubules. The intermediate chains mediate the binding of dynein to dynactin via its 150 kDa component (p150-glued) DCTN1. Involved in membrane-transport, such as Golgi apparatus, late endosomes and lysosomes. The sequence is that of Cytoplasmic dynein 1 intermediate chain 2 (DYNC1I2) from Bos taurus (Bovine).